A 130-amino-acid chain; its full sequence is MNPPSTKVPWAAVTLLLLLLLPPALLSPGAAAQPLPDCCRQKTCSCRLYELLHGAGNHAAGILTLGKRRPGPPGLQGRLQRLLQASGNHAAGILTMGRRAGAEPAPRPCPGRRCPVVAVPSAAPGGRSGV.

Positions 1-32 (MNPPSTKVPWAAVTLLLLLLLPPALLSPGAAA) are cleaved as a signal peptide. The residue at position 33 (Gln-33) is a Pyrrolidone carboxylic acid. 2 disulfides stabilise this stretch: Cys-38–Cys-44 and Cys-39–Cys-46. Leucine amide is present on Leu-65. Residue Met-96 is modified to Methionine amide. The propeptide at 97 to 130 (GRRAGAEPAPRPCPGRRCPVVAVPSAAPGGRSGV) is removed in mature form.

This sequence belongs to the orexin family. Specific enzymatic cleavages at paired basic residues yield the different active peptides.

Its subcellular location is the rough endoplasmic reticulum. The protein localises to the cytoplasmic vesicle. It localises to the synapse. Functionally, neuropeptides that play a significant role in the regulation of food intake and sleep-wakefulness, possibly by coordinating the complex behavioral and physiologic responses of these complementary homeostatic functions. A broader role in the homeostatic regulation of energy metabolism, autonomic function, hormonal balance and the regulation of body fluids, is also suggested. In terms of biological role, binds to orexin receptors HCRTR1/OX1R and HCRTR2/OX2R with a high affinity. Stimulates food intake. Modulates pituitary luteinizing hormone secretion in an ovarian steroid-dependent manner. Its function is as follows. Binds to orexin receptor HCRTR2/OX2R only. Stimulates food intake. Modulates pituitary luteinizing hormone secretion in an ovarian steroid-dependent manner. The polypeptide is Hypocretin neuropeptide precursor (HCRT) (Canis lupus familiaris (Dog)).